The sequence spans 99 residues: Putative UPF0320 protein YDR543C (99 aa).

A disordered region spans residues 80-99; sequence EKSPPKSPKHKNILSFNNNT.

The protein belongs to the UPF0320 family.

This chain is Putative UPF0320 protein YDR543C, found in Saccharomyces cerevisiae (strain ATCC 204508 / S288c) (Baker's yeast).